The sequence spans 190 residues: uncharacterized protein (190 aa).

Positions 1–185 constitute a Macro domain; the sequence is MITMFKIVRG…LALETIGLGD (185 aa).

This is an uncharacterized protein from Pyrococcus horikoshii (strain ATCC 700860 / DSM 12428 / JCM 9974 / NBRC 100139 / OT-3).